A 223-amino-acid polypeptide reads, in one-letter code: Putative PAN domain-containing protein R486 (223 aa).

Positions 1 to 23 are cleaved as a signal peptide; the sequence is MSQTAIIIWIVVIIILLVLGGLG. The segment at 39–73 is disordered; it reads PTPINPPSSITPIQPINPPSSITPIQPSGPPSGGN. Positions 45–64 are enriched in low complexity; it reads PSSITPIQPINPPSSITPIQ. PAN domains are found at residues 80 to 155 and 159 to 223; these read CPAY…EDGC and ARYN…KMPH. Cystine bridges form between Cys80–Cys155 and Cys109–Cys131. 3 N-linked (GlcNAc...) asparagine; by host glycosylation sites follow: Asn162, Asn189, and Asn213. Cys182 and Cys204 are joined by a disulfide.

The protein localises to the secreted. The protein resides in the virion. This Acanthamoeba polyphaga mimivirus (APMV) protein is Putative PAN domain-containing protein R486.